Reading from the N-terminus, the 467-residue chain is MNPEALKGVAVSVIGAGKSGVAAAGLLASAGARPLVSEFGTVKAEAAEQMRALGVPFEEGGHSERVFEAELCVVSPGIPRTAPVIREMEARGISVVSEIELASWFCRARIIGITGTDGKTTTATLIHRICEADGEQQGYRAFSVGNIGTPFSSEVSGMEPDDIAVLELSSYQLEGCSSFRPNIAVLTNITPDHMDRYGGDIHAYARAKFRIHASQQAGDTLIYNHDDPLLRAHFEGDGPWPFKVVRTGLKAESFEGVSEDFVSVADGWIVIRTAGLTEQFMPVDEVMKPGFRGEHNLYNVLSSVAAARAAGVRDDAVRRSLSEFGGVEHRQEFVGSFCGVDWINDSKATNVNAMRQALQTVPAGMVLIAGGRDKGNDYASIAELVKEKVSCIVAIGESRGKIAEAFRGVVPVFEAASLHEAVELARQSARPGGSVLFSPACSSFDMFSDFEDRGRQFKQSVREMASC.

Residue 115–121 (GTDGKTT) participates in ATP binding.

The protein belongs to the MurCDEF family.

It localises to the cytoplasm. It catalyses the reaction UDP-N-acetyl-alpha-D-muramoyl-L-alanine + D-glutamate + ATP = UDP-N-acetyl-alpha-D-muramoyl-L-alanyl-D-glutamate + ADP + phosphate + H(+). Its pathway is cell wall biogenesis; peptidoglycan biosynthesis. Functionally, cell wall formation. Catalyzes the addition of glutamate to the nucleotide precursor UDP-N-acetylmuramoyl-L-alanine (UMA). This chain is UDP-N-acetylmuramoylalanine--D-glutamate ligase, found in Chlorobaculum parvum (strain DSM 263 / NCIMB 8327) (Chlorobium vibrioforme subsp. thiosulfatophilum).